Consider the following 139-residue polypeptide: Cystatin-11 (139 aa).

Residues 1-28 (MMARLWKTTWFLLAILVALVAFSYQVKR) form the signal peptide. Intrachain disulfides connect cysteine 94/cysteine 102 and cysteine 115/cysteine 135. N-linked (GlcNAc...) asparagine glycosylation occurs at asparagine 134.

Belongs to the cystatin family.

It is found in the secreted. Functionally, has antibacterial activity against the Gram-negative bacteria E.coli. May play a role in sperm maturation and fertilization. This is Cystatin-11 (Cst11) from Rattus norvegicus (Rat).